Reading from the N-terminus, the 328-residue chain is MHTLIERLEKVTNSKELEEVRLNALGKKGVFADKFNQLKNLNGGEKNAFAKEIHHYKQAFEKAFEWKKKAILELELEERLKKEKIDVSLFNAIKTSSSHPLNYTKNKIIEFFTPLGYKLEIGSLVEDDFHNFSALNLPPYHPARDMQDTFYFKDHKLLRTHTSPVQIHTMQEQTPPIKMICLGETFRRDYDLTHTPMFHQIEGLVVDQKGNIRFTHLKGVIEDFLHYFFGGVKLRWRSSFFPFTEPSAEVDISCVFCKQEGCRVCSHTGWLEVLGCGMVNNAVFEAIGYENVSGFAFGMGIERLAMLTCQINDLRSFFETDLRVLESF.

Position 245 (Glu-245) interacts with Mg(2+).

Belongs to the class-II aminoacyl-tRNA synthetase family. Phe-tRNA synthetase alpha subunit type 1 subfamily. As to quaternary structure, tetramer of two alpha and two beta subunits. Mg(2+) is required as a cofactor.

Its subcellular location is the cytoplasm. It catalyses the reaction tRNA(Phe) + L-phenylalanine + ATP = L-phenylalanyl-tRNA(Phe) + AMP + diphosphate + H(+). This is Phenylalanine--tRNA ligase alpha subunit from Helicobacter pylori (strain P12).